The chain runs to 720 residues: Phenylalanine--tRNA ligase beta subunit, chloroplastic (720 aa).

In terms of domain architecture, B5 spans 319–404; sequence NSTLNIDISL…RVYGYNQFQS (86 aa). Mg(2+)-binding residues include Asp-382, Asp-388, Glu-391, and Glu-392. One can recognise an FDX-ACB domain in the interval 626 to 719; that stretch reads SKYPCITRDL…IIKKLNLEIR (94 aa).

Belongs to the phenylalanyl-tRNA synthetase beta subunit family. Type 1 subfamily. Tetramer of two alpha and two beta subunits. Mg(2+) serves as cofactor.

It localises to the plastid. The protein resides in the chloroplast. It carries out the reaction tRNA(Phe) + L-phenylalanine + ATP = L-phenylalanyl-tRNA(Phe) + AMP + diphosphate + H(+). The sequence is that of Phenylalanine--tRNA ligase beta subunit, chloroplastic (pheT) from Porphyra purpurea (Red seaweed).